The chain runs to 1514 residues: Neuropathy target esterase sws (1514 aa).

Residues 1–34 (MDVLELLRASATGSYTALFSDAWCQYVSKQITNS) lie on the Lumenal side of the membrane. The chain crosses the membrane as a helical span at residues 35–55 (MYLYCALGVLSMVFLAWFMYF). Residues 56–1514 (KRLARIRLRD…KGGAYNETKN (1459 aa)) are Cytoplasmic-facing. 175 to 302 (IFGHFEKPVF…IRVIQVIMIR (128 aa)) is a binding site for a nucleoside 3',5'-cyclic phosphate. Over residues 337–352 (STHSSQCSRQTGSQPT) the composition is skewed to polar residues. The interval 337 to 418 (STHSSQCSRQ…NPNPDVINTS (82 aa)) is disordered. Low complexity predominate over residues 356-374 (PAPTCSNTTTTASPTTANT). Phosphoserine is present on Ser-457. A nucleoside 3',5'-cyclic phosphate contacts are provided by residues 515–644 (ELGL…VVRR) and 633–760 (IVLD…LSHR). The PNPLA domain maps to 987–1153 (LVLGGGGARG…VNNLPGQLWR (167 aa)). The GXGXXG signature appears at 991-996 (GGGARG). Residues 1018–1022 (GVSIG) carry the GXSXG motif. Residue Ser-1020 is the Nucleophile of the active site. Asp-1140 (proton acceptor) is an active-site residue. The DGA/G motif lies at 1140–1142 (DGG). Residue Ser-1234 is modified to Phosphoserine. Positions 1409 to 1514 (EKSIHSAATS…KGGAYNETKN (106 aa)) are disordered. Composition is skewed to basic and acidic residues over residues 1425–1449 (RSRE…ETER) and 1456–1470 (LDRK…KEPE). The segment covering 1471 to 1489 (QEQELETEEPNQENTEVEE) has biased composition (acidic residues).

The protein belongs to the NTE family. As to quaternary structure, interacts with Pka-C3; interaction inhibits the catalytic function of Pka-C3 and the esterase activity of sws.

The protein localises to the endoplasmic reticulum membrane. It carries out the reaction a 1-acyl-sn-glycero-3-phosphocholine + H2O = sn-glycerol 3-phosphocholine + a fatty acid + H(+). Phospholipase B that deacylates intracellular phosphatidylcholine (PtdCho), generating glycerophosphocholine (GroPtdCho). This deacylation occurs at both sn-2 and sn-1 positions of PtdCho. Its specific chemical modification by certain organophosphorus (OP) compounds leads to distal axonopathy. Plays a role in the signaling mechanism between neurons and glia that regulates glia wrapping during development of the adult brain. Essential for membrane lipid homeostasis and cell survival in both neurons and glia of the adult brain. The protein is Neuropathy target esterase sws of Drosophila ananassae (Fruit fly).